Here is a 215-residue protein sequence, read N- to C-terminus: Cytochrome b6 (215 aa).

The chain crosses the membrane as a helical span at residues 32–52 (IFYCLGGITLTCFLVQVATGF). Residue Cys-35 participates in heme c binding. His-86 and His-100 together coordinate heme b. The next 3 helical transmembrane spans lie at 90–110 (ASMM…TGGF), 116–136 (LTWV…VTGY), and 186–206 (LHTF…FLMI). 2 residues coordinate heme b: His-187 and His-202.

It belongs to the cytochrome b family. PetB subfamily. As to quaternary structure, the 4 large subunits of the cytochrome b6-f complex are cytochrome b6, subunit IV (17 kDa polypeptide, PetD), cytochrome f and the Rieske protein, while the 4 small subunits are PetG, PetL, PetM and PetN. The complex functions as a dimer. It depends on heme b as a cofactor. The cofactor is heme c.

It is found in the plastid. The protein localises to the chloroplast thylakoid membrane. In terms of biological role, component of the cytochrome b6-f complex, which mediates electron transfer between photosystem II (PSII) and photosystem I (PSI), cyclic electron flow around PSI, and state transitions. The polypeptide is Cytochrome b6 (Citrus sinensis (Sweet orange)).